Reading from the N-terminus, the 192-residue chain is Ion-translocating oxidoreductase complex subunit A (192 aa).

A run of 6 helical transmembrane segments spans residues 5 to 25 (ILLL…FLGL), 39 to 59 (IGMG…AYLV), 72 to 92 (LRTM…EMVV), 102 to 122 (LLGI…VALL), 134 to 154 (IIYG…FASM), and 171 to 191 (SIAM…TGLV).

The protein belongs to the NqrDE/RnfAE family. The complex is composed of six subunits: RnfA, RnfB, RnfC, RnfD, RnfE and RnfG.

It localises to the cell inner membrane. Its function is as follows. Part of a membrane-bound complex that couples electron transfer with translocation of ions across the membrane. The polypeptide is Ion-translocating oxidoreductase complex subunit A (Vibrio vulnificus (strain CMCP6)).